The sequence spans 139 residues: Endocuticle structural glycoprotein SgAbd-8 (139 aa).

Position 1 is a pyrrolidone carboxylic acid (Gln-1). Thr-14 carries an O-linked (HexNAc...) threonine glycan. Ser-15 is a glycosylation site (O-linked (HexNAc...) serine). Residues 29-99 (DGSYAWSYET…PEGAHLPTPP (71 aa)) enclose the Chitin-binding type R&amp;R domain. An O-linked (HexNAc...) threonine glycan is attached at Thr-97. The tract at residues 111-139 (FIASQPQQPGNNGGGQFPRPQPFPRPGAF) is disordered. The segment covering 129–139 (RPQPFPRPGAF) has biased composition (pro residues).

Its function is as follows. Component of the abdominal endocuticle. The chain is Endocuticle structural glycoprotein SgAbd-8 from Schistocerca gregaria (Desert locust).